We begin with the raw amino-acid sequence, 479 residues long: Ribosomal RNA small subunit methyltransferase F (479 aa).

S-adenosyl-L-methionine-binding positions include 125-131, glutamate 149, aspartate 176, and aspartate 194; that span reads AAAPGSK. Cysteine 247 (nucleophile) is an active-site residue.

This sequence belongs to the class I-like SAM-binding methyltransferase superfamily. RsmB/NOP family.

The protein localises to the cytoplasm. It catalyses the reaction cytidine(1407) in 16S rRNA + S-adenosyl-L-methionine = 5-methylcytidine(1407) in 16S rRNA + S-adenosyl-L-homocysteine + H(+). Its function is as follows. Specifically methylates the cytosine at position 1407 (m5C1407) of 16S rRNA. In Salmonella enteritidis PT4 (strain P125109), this protein is Ribosomal RNA small subunit methyltransferase F.